Consider the following 258-residue polypeptide: Snake venom serine protease HS114 (258 aa).

The N-terminal stretch at 1-18 (MVLVRVVANLLILQLSYA) is a signal peptide. The propeptide occupies 19-24 (QKVSEL). Residues 25–249 (VVGGDECNIN…YNTWIESVIA (225 aa)) form the Peptidase S1 domain. Cystine bridges form between Cys-31–Cys-163, Cys-50–Cys-66, Cys-98–Cys-256, Cys-142–Cys-210, Cys-174–Cys-189, and Cys-200–Cys-225. Residue Asn-44 is glycosylated (N-linked (GlcNAc...) asparagine). Catalysis depends on charge relay system residues His-65 and Asp-110. The Charge relay system role is filled by Ser-204.

Belongs to the peptidase S1 family. Snake venom subfamily. In terms of assembly, monomer. In terms of processing, N-glycosylated. Contains approximately 10% carbohydrates. As to expression, expressed by the venom gland.

The protein localises to the secreted. With respect to regulation, inhibited by benzamidine, PMSF, leupeptin, SDS and DTT, but not by EDTA, and commercial antivenom. Snake venom serine protease that shows non-specific action on fibrinogen. It preferentially degrades fibrinogen Aalpha (FGA), releasing fibrinopeptide A, and shows a lower activity on fibrinogen Bbeta (FGB), releasing fibrinopeptide B and other uncommon fibrinopeptides. Also shows low fibrinolytic activity compared to plasmin. Has high enzymatic activity on the substrates for activated protein C and factor XIa, and for thrombin. Shows a wide activity spectrum at different peptide sequences, with a preferential cleavage at Lys-|-Xaa over Arg-|-Xaa bonds. The polypeptide is Snake venom serine protease HS114 (Bothrops jararaca (Jararaca)).